Reading from the N-terminus, the 493-residue chain is Probable cytosol aminopeptidase (493 aa).

K262 and D267 together coordinate Mn(2+). K274 is a catalytic residue. Residues D285, D344, and E346 each coordinate Mn(2+). R348 is an active-site residue.

This sequence belongs to the peptidase M17 family. It depends on Mn(2+) as a cofactor.

The protein resides in the cytoplasm. It carries out the reaction Release of an N-terminal amino acid, Xaa-|-Yaa-, in which Xaa is preferably Leu, but may be other amino acids including Pro although not Arg or Lys, and Yaa may be Pro. Amino acid amides and methyl esters are also readily hydrolyzed, but rates on arylamides are exceedingly low.. The catalysed reaction is Release of an N-terminal amino acid, preferentially leucine, but not glutamic or aspartic acids.. In terms of biological role, presumably involved in the processing and regular turnover of intracellular proteins. Catalyzes the removal of unsubstituted N-terminal amino acids from various peptides. The sequence is that of Probable cytosol aminopeptidase from Xanthomonas campestris pv. campestris (strain 8004).